Here is a 446-residue protein sequence, read N- to C-terminus: Thymidine phosphorylase (446 aa).

This sequence belongs to the thymidine/pyrimidine-nucleoside phosphorylase family. Homodimer.

It carries out the reaction thymidine + phosphate = 2-deoxy-alpha-D-ribose 1-phosphate + thymine. It functions in the pathway pyrimidine metabolism; dTMP biosynthesis via salvage pathway; dTMP from thymine: step 1/2. In terms of biological role, the enzymes which catalyze the reversible phosphorolysis of pyrimidine nucleosides are involved in the degradation of these compounds and in their utilization as carbon and energy sources, or in the rescue of pyrimidine bases for nucleotide synthesis. The chain is Thymidine phosphorylase from Idiomarina loihiensis (strain ATCC BAA-735 / DSM 15497 / L2-TR).